The primary structure comprises 197 residues: Small ribosomal subunit protein uS4c (197 aa).

Residues 84 to 143 (MRLDNIIFQLGMASTIPAARQLVCHRHILVNHRVVDIPSYRCKPRDIISIRNRPTSANAL) form the S4 RNA-binding domain.

The protein belongs to the universal ribosomal protein uS4 family. In terms of assembly, part of the 30S ribosomal subunit. Contacts protein S5. The interaction surface between S4 and S5 is involved in control of translational fidelity.

Its subcellular location is the plastid. It localises to the chloroplast. One of the primary rRNA binding proteins, it binds directly to 16S rRNA where it nucleates assembly of the body of the 30S subunit. Functionally, with S5 and S12 plays an important role in translational accuracy. The sequence is that of Small ribosomal subunit protein uS4c (rps4) from Adiantum capillus-veneris (Maidenhair fern).